The following is a 155-amino-acid chain: SsrA-binding protein (155 aa).

This sequence belongs to the SmpB family.

The protein localises to the cytoplasm. Its function is as follows. Required for rescue of stalled ribosomes mediated by trans-translation. Binds to transfer-messenger RNA (tmRNA), required for stable association of tmRNA with ribosomes. tmRNA and SmpB together mimic tRNA shape, replacing the anticodon stem-loop with SmpB. tmRNA is encoded by the ssrA gene; the 2 termini fold to resemble tRNA(Ala) and it encodes a 'tag peptide', a short internal open reading frame. During trans-translation Ala-aminoacylated tmRNA acts like a tRNA, entering the A-site of stalled ribosomes, displacing the stalled mRNA. The ribosome then switches to translate the ORF on the tmRNA; the nascent peptide is terminated with the 'tag peptide' encoded by the tmRNA and targeted for degradation. The ribosome is freed to recommence translation, which seems to be the essential function of trans-translation. The chain is SsrA-binding protein from Moorella thermoacetica (strain ATCC 39073 / JCM 9320).